Here is a 485-residue protein sequence, read N- to C-terminus: P2X purinoceptor 2 (485 aa).

Topologically, residues 1–43 (MAAAQPRLPAGAAMVRRLARGCWSAFWDYETPKVIVVRNRRLG) are cytoplasmic. 6 cysteine pairs are disulfide-bonded: C22/C443, C126/C177, C137/C160, C143/C171, C227/C237, and C271/C280. Residues 44–64 (FVHRMVQLLILLYFVWYVFIV) traverse the membrane as a helical segment. Over 65 to 339 (QKSYQDSETG…IVHGQAGKFS (275 aa)) the chain is Extracellular. Residues K82 and K84 each contribute to the ATP site. The N-linked (GlcNAc...) asparagine glycan is linked to N195. Residue T197 coordinates ATP. N-linked (GlcNAc...) asparagine glycosylation is present at N252. Positions 297, 301, and 303 each coordinate ATP. N311 carries an N-linked (GlcNAc...) asparagine glycan. K321 lines the ATP pocket. Residues 322–335 (AYGIRIDVIVHGQA) form a pore-forming motif region. A helical transmembrane segment spans residues 340 to 360 (LIPTIINLATALTSIGVGSFL). Topologically, residues 361–485 (CDWILLTFMN…STDPKGLAQL (125 aa)) are cytoplasmic. Positions 406-485 (PPPSHYSQDQ…STDPKGLAQL (80 aa)) are disordered. Positions 420–436 (PSGEGPALGEGAELPLA) are enriched in low complexity. Residues 469-478 (PSQQDSTSTD) are compositionally biased toward polar residues.

Belongs to the P2X receptor family. Homotrimer and heterotrimer; functional P2XRs are organized as homomeric and heteromeric trimers. Homotrimer. Forms heterotrimer with P2XR1. Forms heterotrimer with P2XR3. Forms heterotrimer with P2XR6.

It localises to the cell membrane. The catalysed reaction is Ca(2+)(in) = Ca(2+)(out). It carries out the reaction K(+)(in) = K(+)(out). The enzyme catalyses Na(+)(in) = Na(+)(out). Its activity is regulated as follows. Fast activation by external ATP. Exhibits slow desensitization during prolonged ATP activation. Not sensitive to the ATP agonist:alpha/beta-methylene-ATP. ATP-gated nonselective transmembrane cation channel permeable to potassium, sodium and calcium. Activation by extracellular ATP induces a variety of cellular responses, such as excitatory postsynaptic responses in sensory neurons, neuromuscular junctions (NMJ) formation, hearing, perception of taste and peristalsis. In the inner ear, regulates sound transduction and auditory neurotransmission, outer hair cell electromotility, inner ear gap junctions, and K(+) recycling. Mediates synaptic transmission between neurons and from neurons to smooth muscle. This chain is P2X purinoceptor 2 (P2rx2), found in Mus musculus (Mouse).